A 143-amino-acid chain; its full sequence is Actin-depolymerizing factor (143 aa).

The region spanning 11-143 (GMGVADHSKN…DLEVLRERAH (133 aa)) is the ADF-H domain.

The protein belongs to the actin-binding proteins ADF family.

Its function is as follows. Actin-depolymerizing protein. Severs actin filaments (F-actin) and binds to actin monomers. In Vitis vinifera (Grape), this protein is Actin-depolymerizing factor.